Here is a 638-residue protein sequence, read N- to C-terminus: MGKIIGIDLGTTNSCVAIMDGNKPRVLENSEGDRTTPSIIAYTEKGEVLVGQPAKRQAITNPKNTLFAIKRLIGRKFRDDEVQRDIKIMPYSIINSENGDAWIDVKKQKMAPPQISAEVLKKMKKTAEDYLGESIKEAVITVPAYFNDAQRQATKDAGRIAGLEVKRIINEPTAAALAYGLDKGEGNRTIAVYDLGGGTFDISIIEIDDVDKEKTFEVLATNGDTHLGGEDFDSRLINYLVQEFKKEQGIDLRNDSLAMQRLKEAAEKAKIELSSAQQTDVNLPYITADSNGPKHLNIKVTRSKLESLVEDLVMRSIEPLKVALKDAGLSVGDINDVILVGGQTRMPMVQSKVADFFGKEPRKDVNPDEAVAVGAAVQGGVLSGDVKDVLLLDVTPLSLGIETMGGIMTSLINKNTTIPTKHSQVFSTAEDNQSAVTIHILQGERKRALDNKSLGQFNLDGIEPAPRGTAQIEVTFDIDSDGILHVSAKDKKTGKEQKITIKASSGLNEEEIKKMINDAEANSEADRKFEELIQVRNQGDQLIHSIRKQLDENKNQIEKKELEKIKSALDELERSLKGENKSEIEKNIQNLLNISSKLTEINQKKSEENLKKEDTSSESKKDENVVDAEFEEIKDPKK.

Thr199 is modified (phosphothreonine; by autocatalysis). The segment at 600-638 is disordered; it reads EINQKKSEENLKKEDTSSESKKDENVVDAEFEEIKDPKK. The segment covering 602 to 624 has biased composition (basic and acidic residues); sequence NQKKSEENLKKEDTSSESKKDEN.

Belongs to the heat shock protein 70 family.

In terms of biological role, acts as a chaperone. This is Chaperone protein DnaK from Buchnera aphidicola subsp. Schizaphis graminum (strain Sg).